Reading from the N-terminus, the 457-residue chain is Glutamyl-tRNA reductase (457 aa).

Substrate contacts are provided by residues 49 to 52 (TCNR), Ser109, 114 to 116 (ETQ), and Gln120. Cys50 functions as the Nucleophile in the catalytic mechanism. 189–194 (GAGKMG) serves as a coordination point for NADP(+).

The protein belongs to the glutamyl-tRNA reductase family. As to quaternary structure, homodimer.

The catalysed reaction is (S)-4-amino-5-oxopentanoate + tRNA(Glu) + NADP(+) = L-glutamyl-tRNA(Glu) + NADPH + H(+). It participates in porphyrin-containing compound metabolism; protoporphyrin-IX biosynthesis; 5-aminolevulinate from L-glutamyl-tRNA(Glu): step 1/2. Functionally, catalyzes the NADPH-dependent reduction of glutamyl-tRNA(Glu) to glutamate 1-semialdehyde (GSA). This chain is Glutamyl-tRNA reductase, found in Oceanobacillus iheyensis (strain DSM 14371 / CIP 107618 / JCM 11309 / KCTC 3954 / HTE831).